Consider the following 128-residue polypeptide: Large ribosomal subunit protein bL12 (128 aa).

The protein belongs to the bacterial ribosomal protein bL12 family. Homodimer. Part of the ribosomal stalk of the 50S ribosomal subunit. Forms a multimeric L10(L12)X complex, where L10 forms an elongated spine to which 2 to 4 L12 dimers bind in a sequential fashion. Binds GTP-bound translation factors.

Its function is as follows. Forms part of the ribosomal stalk which helps the ribosome interact with GTP-bound translation factors. Is thus essential for accurate translation. The polypeptide is Large ribosomal subunit protein bL12 (Corynebacterium efficiens (strain DSM 44549 / YS-314 / AJ 12310 / JCM 11189 / NBRC 100395)).